The following is a 180-amino-acid chain: UPF0227 protein KPN78578_10770 (180 aa).

This sequence belongs to the UPF0227 family.

This Klebsiella pneumoniae subsp. pneumoniae (strain ATCC 700721 / MGH 78578) protein is UPF0227 protein KPN78578_10770.